The chain runs to 292 residues: 1D-myo-inositol 2-acetamido-2-deoxy-alpha-D-glucopyranoside deacetylase (292 aa).

Positions 11, 14, and 146 each coordinate Zn(2+).

This sequence belongs to the MshB deacetylase family. Zn(2+) serves as cofactor.

It carries out the reaction 1D-myo-inositol 2-acetamido-2-deoxy-alpha-D-glucopyranoside + H2O = 1D-myo-inositol 2-amino-2-deoxy-alpha-D-glucopyranoside + acetate. Catalyzes the deacetylation of 1D-myo-inositol 2-acetamido-2-deoxy-alpha-D-glucopyranoside (GlcNAc-Ins) in the mycothiol biosynthesis pathway. This chain is 1D-myo-inositol 2-acetamido-2-deoxy-alpha-D-glucopyranoside deacetylase, found in Acidothermus cellulolyticus (strain ATCC 43068 / DSM 8971 / 11B).